The primary structure comprises 30 residues: uncharacterized protein (30 aa).

Positions 1-22 are cleaved as a signal peptide; that stretch reads MRFLFFLPPSFITSFLYLALYS.

This is an uncharacterized protein from Schizosaccharomyces pombe (strain 972 / ATCC 24843) (Fission yeast).